Reading from the N-terminus, the 116-residue chain is Endoribonuclease toxin ChpB (116 aa).

The protein belongs to the PemK/MazF family. Homodimer, interacts with ChpS, which inhibits the endoribonuclease activity.

Stimulated in vitro in a concentration-dependent fashion by extracellular death factor (EDF, a quorum sensing pentapeptide sequence NNWNN, probably produced from the zwf gene product glucose-6-phosphate 1-dehydrogenase), which is able to overcome inhibition by cognate antitoxin ChpS. Toxic component of a type II toxin-antitoxin (TA) system. ChpB is a sequence-specific mRNA and (weak) tmRNA endoribonuclease that inhibits protein synthesis and induces bacterial stasis. Cleavage is independent of the ribosome. Cleavage occurs at ACY sequences where Y is not C. The endoribonuclease activity is not as strong as that of MazF. The endoribonuclease activity (a toxin) is inhibited by its labile cognate antitoxin ChpS. Toxicity results when the levels of ChpS decrease in the cell, leading to mRNA degradation. Both ChpS and ChpB probably bind to the promoter region of the chpS-chpB operon to autoregulate their synthesis. The chain is Endoribonuclease toxin ChpB (chpB) from Escherichia coli (strain K12).